Here is a 396-residue protein sequence, read N- to C-terminus: Elongation factor Tu (396 aa).

Positions 10-206 (KPHVNIGTIG…AVDSYIPEPV (197 aa)) constitute a tr-type G domain. The segment at 19 to 26 (GHVDHGKT) is G1. Position 19–26 (19–26 (GHVDHGKT)) interacts with GTP. Thr-26 provides a ligand contact to Mg(2+). The tract at residues 60-64 (GITIA) is G2. Residues 81–84 (DCPG) form a G3 region. GTP is bound by residues 81 to 85 (DCPGH) and 136 to 139 (NKAD). Residues 136–139 (NKAD) form a G4 region. A G5 region spans residues 174–176 (SAL).

It belongs to the TRAFAC class translation factor GTPase superfamily. Classic translation factor GTPase family. EF-Tu/EF-1A subfamily. As to quaternary structure, monomer.

The protein resides in the cytoplasm. The enzyme catalyses GTP + H2O = GDP + phosphate + H(+). Functionally, GTP hydrolase that promotes the GTP-dependent binding of aminoacyl-tRNA to the A-site of ribosomes during protein biosynthesis. The protein is Elongation factor Tu of Geotalea uraniireducens (strain Rf4) (Geobacter uraniireducens).